Consider the following 557-residue polypeptide: Leucine-rich glioma-inactivated protein 1 (557 aa).

The signal sequence occupies residues 1–34 (MESERSKRMGNACIPLKRIAYFLCLLSALLLTEG). The region spanning 35–72 (KKPAKPKCPAVCTCTKDNALCENARSIPRTVPPDVISL) is the LRRNT domain. LRR repeat units follow at residues 92-113 (SLQL…AFIG), 116-137 (HLEY…TFRG), and 140-161 (SLIH…IFKG). The LRRCT domain maps to 173-223 (NSFNCDCKLKWLVEWLGHTNATVEDIYCEGPPEYKKRKINSLSSKDFDCII). N192 carries an N-linked (GlcNAc...) asparagine glycan. EAR repeat units lie at residues 225–267 (EFAK…EWDH), 271–313 (TFRN…KRDS), 317–364 (KFIK…KWNG), 366–415 (GFYS…QWNK), 419–462 (LFTN…KWGG), 464–506 (SFQD…NWDA), and 510–552 (KFVK…KHVI). The N-linked (GlcNAc...) asparagine glycan is linked to N277. N422 is a glycosylation site (N-linked (GlcNAc...) asparagine).

Oligomer. Interacts with KCNA1 within a complex containing KCNA1, KCNA4 and KCNAB1. Part of a complex containing ADAM22, DLG4/PSD95 and CACNG2 (stargazin). Can bind to ADAM11 and ADAM23. In terms of processing, glycosylated.

It is found in the secreted. It localises to the synapse. Its subcellular location is the cytoplasm. In terms of biological role, regulates voltage-gated potassium channels assembled from KCNA1, KCNA4 and KCNAB1. It slows down channel inactivation by precluding channel closure mediated by the KCNAB1 subunit. Ligand for ADAM22 that positively regulates synaptic transmission mediated by AMPA-type glutamate receptors. Plays a role in suppressing the production of MMP1/3 through the phosphatidylinositol 3-kinase/ERK pathway. The sequence is that of Leucine-rich glioma-inactivated protein 1 (LGI1) from Pongo abelii (Sumatran orangutan).